The following is a 141-amino-acid chain: Mite group 2 allergen Tyr p 2 (141 aa).

An N-terminal signal peptide occupies residues 1-15 (MKFLILFALVAVAAA). 3 cysteine pairs are disulfide-bonded: cysteine 23–cysteine 132, cysteine 36–cysteine 41, and cysteine 87–cysteine 92. Residue asparagine 103 is glycosylated (N-linked (GlcNAc...) asparagine).

This sequence belongs to the NPC2 family.

It is found in the secreted. The sequence is that of Mite group 2 allergen Tyr p 2 from Tyrophagus putrescentiae (Mold mite).